A 20-amino-acid polypeptide reads, in one-letter code: TKQTLKVLITGAAGQIGYSL.

The protein is Unknown protein NF028 from 2D-PAGE of Naegleria fowleri (Brain eating amoeba).